A 1059-amino-acid chain; its full sequence is Ubiquitin carboxyl-terminal hydrolase 36 (1059 aa).

Disordered stretches follow at residues 22 to 45 and 102 to 145; these read LGGNSSAGSSTDQAKSGEDTNGSL and GKLV…KPKR. Polar residues predominate over residues 23-45; that stretch reads GGNSSAGSSTDQAKSGEDTNGSL. Over residues 121–138 the composition is skewed to low complexity; the sequence is HPNNQSHHNHPHPTSNPN. The USP domain occupies 168–457; the sequence is TGMINVGNTC…NAYIMFFELD (290 aa). Residue Cys-177 is the Nucleophile of the active site. His-416 serves as the catalytic Proton acceptor. Disordered regions lie at residues 464 to 512, 554 to 853, 941 to 1005, and 1022 to 1059; these read PPAN…YTNG, ATSA…VTSN, RQRD…FYNQ, and FGGAGSAKFQQQRALQRHLSAGGGFSRRQPSAQQQQQT. Composition is skewed to low complexity over residues 479–494 and 561–580; these read STTPVPAATVSSPSPT and NGNKSSSPSSNSSSNHKSIN. Ser-490 and Ser-492 each carry phosphoserine. Polar residues predominate over residues 603 to 615; the sequence is TTAQLPSMPNMTE. 2 positions are modified to phosphothreonine: Thr-632 and Thr-636. 2 positions are modified to phosphoserine: Ser-646 and Ser-648. A compositionally biased stretch (polar residues) spans 673–702; the sequence is ESGQTNGHSKTNGSLTNGSASSSVHVNNSK. Residues 703–720 are compositionally biased toward basic and acidic residues; that stretch reads QKTDAIDEIFKSLKKSAD. Ser-721 bears the Phosphoserine mark. Residues 721–730 show a composition bias toward acidic residues; the sequence is SEEDDDEEEP. Over residues 740 to 750 the composition is skewed to low complexity; the sequence is PQKQSQSQSKA. Residues 751–760 show a composition bias toward pro residues; sequence PPSPKTPPSP. Phosphoserine is present on Ser-753. Residue Thr-756 is modified to Phosphothreonine. Ser-759 is subject to Phosphoserine. Residues 779 to 788 show a composition bias toward acidic residues; that stretch reads DAIDDDDDAV. Phosphothreonine is present on Thr-799. Residues 806–818 show a composition bias toward polar residues; sequence NPFSSSKPSTDSP. Ser-817 is modified (phosphoserine). The residue at position 820 (Thr-820) is a Phosphothreonine. Polar residues predominate over residues 833 to 853; it reads ALKSHQQPRVGNGYQSNVTSN. Over residues 963 to 974 the composition is skewed to low complexity; sequence SGSAKGNNASNS.

Belongs to the peptidase C19 family. As to quaternary structure, interacts with atms/PAF1, but not with CycT.

The protein resides in the nucleus. Its subcellular location is the nucleolus. The catalysed reaction is Thiol-dependent hydrolysis of ester, thioester, amide, peptide and isopeptide bonds formed by the C-terminal Gly of ubiquitin (a 76-residue protein attached to proteins as an intracellular targeting signal).. In terms of biological role, required for maintaining multiple types of adult stem cells, including male and female germline, epithelial follicle cell and intestinal stem cells. May function as a transcriptional repressor by continually deubiquiting histone H2B at the promoters of genes critical for cellular differentiation, thereby preventing histone H3 'Lys-4' trimethylation (H3K4). Controls selective autophagy activation by ubiquitinated proteins. The polypeptide is Ubiquitin carboxyl-terminal hydrolase 36 (Usp36) (Drosophila sechellia (Fruit fly)).